A 408-amino-acid chain; its full sequence is Dual-specificity RNA methyltransferase RlmN (408 aa).

The active-site Proton acceptor is the E126. The Radical SAM core domain maps to 132-373; that stretch reads EEGRGTLCLS…NQAGYASPIR (242 aa). An intrachain disulfide couples C139 to C384. [4Fe-4S] cluster contacts are provided by C146, C150, and C153. Residues 210-211, S242, 264-266, and N341 each bind S-adenosyl-L-methionine; these read GE and SLH. C384 acts as the S-methylcysteine intermediate in catalysis.

It belongs to the radical SAM superfamily. RlmN family. Requires [4Fe-4S] cluster as cofactor.

It localises to the cytoplasm. The enzyme catalyses adenosine(2503) in 23S rRNA + 2 reduced [2Fe-2S]-[ferredoxin] + 2 S-adenosyl-L-methionine = 2-methyladenosine(2503) in 23S rRNA + 5'-deoxyadenosine + L-methionine + 2 oxidized [2Fe-2S]-[ferredoxin] + S-adenosyl-L-homocysteine. The catalysed reaction is adenosine(37) in tRNA + 2 reduced [2Fe-2S]-[ferredoxin] + 2 S-adenosyl-L-methionine = 2-methyladenosine(37) in tRNA + 5'-deoxyadenosine + L-methionine + 2 oxidized [2Fe-2S]-[ferredoxin] + S-adenosyl-L-homocysteine. Specifically methylates position 2 of adenine 2503 in 23S rRNA and position 2 of adenine 37 in tRNAs. m2A2503 modification seems to play a crucial role in the proofreading step occurring at the peptidyl transferase center and thus would serve to optimize ribosomal fidelity. In Bartonella tribocorum (strain CIP 105476 / IBS 506), this protein is Dual-specificity RNA methyltransferase RlmN.